The primary structure comprises 325 residues: Protein ORANGE-GREEN, chloroplastic (325 aa).

The transit peptide at 1–54 (MDRVLVASYPINHLIRPHSFRIDYCWSTCFTSRLNSGKERQKLSSRWRWRSMAS) directs the protein to the chloroplast. Low complexity predominate over residues 53–71 (ASDSTDSSSSSSFAPSVES). Residues 53 to 77 (ASDSTDSSSSSSFAPSVESDPSDKT) are disordered. 2 consecutive transmembrane segments (helical) span residues 164-184 (LYYV…GLLA) and 217-237 (IVAS…VVEV). A CR-type-like region spans residues 226–317 (VGVISALMVV…CTGMAMASEH (92 aa)). A CXXCXGXG motif repeat occupies 248 to 255 (CKYCLGTG). One copy of the CXXCXXXG motif repeat lies at 259–266 (CARCSNTG). Residues 292–299 (CQNCSGSG) form a CXXCXGXG motif repeat. The stretch at 303–310 (CPTCLCTG) is one CXXCXXXG motif repeat.

The protein belongs to the orange-like family.

The protein resides in the plastid. The protein localises to the chloroplast membrane. Its function is as follows. Involved in chloroplast differentiation in fruit flesh. This is Protein ORANGE-GREEN, chloroplastic from Cucumis melo (Muskmelon).